We begin with the raw amino-acid sequence, 388 residues long: MNIHEYQGKEILRKYNVPVPRGIPAFSVDEAIKAAETLGGPVWVVKAQIHAGGRGKGGGVKVAKSIEQVKEYASSILGMTLVTHQTGPEGKLVKRLLIEEGADIKKELYVSLVVDRVSQQVALMASSEGGMDIEEVAESHPEKIHTLLIDPQAGLQDAQADDIARKIGVPDASVPQARQALQGLYKAFWETDASQAEINPLILTGDGKVIALDAKFNFDSNALFRHPEIVAYRDLDEEDPAEIEASKFDLAYISLDGNIGCLVNGAGLAMATMDTIKLFGGEPANFLDVGGGATTEKVTEAFKLMLKNPDVKAILVNIFGGIMRCDVIAEGVIAAAKAVSLSVPLVVRMKGTNEDLGKKMLADSGLPIIAADTMAEAAEKVVAAAAGK.

Positions Lys9 to Glu244 constitute an ATP-grasp domain. Residues Lys46, Gly53–Gly55, Glu99, Ala102, and Glu107 each bind ATP. Mg(2+) is bound by residues Asn199 and Asp213. Residues Asn264 and Gly321–Met323 each bind substrate.

Belongs to the succinate/malate CoA ligase beta subunit family. In terms of assembly, heterotetramer of two alpha and two beta subunits. It depends on Mg(2+) as a cofactor.

It catalyses the reaction succinate + ATP + CoA = succinyl-CoA + ADP + phosphate. The catalysed reaction is GTP + succinate + CoA = succinyl-CoA + GDP + phosphate. The protein operates within carbohydrate metabolism; tricarboxylic acid cycle; succinate from succinyl-CoA (ligase route): step 1/1. Its function is as follows. Succinyl-CoA synthetase functions in the citric acid cycle (TCA), coupling the hydrolysis of succinyl-CoA to the synthesis of either ATP or GTP and thus represents the only step of substrate-level phosphorylation in the TCA. The beta subunit provides nucleotide specificity of the enzyme and binds the substrate succinate, while the binding sites for coenzyme A and phosphate are found in the alpha subunit. The polypeptide is Succinate--CoA ligase [ADP-forming] subunit beta (Ralstonia pickettii (strain 12J)).